We begin with the raw amino-acid sequence, 497 residues long: Serine hydroxymethyltransferase (497 aa).

(6S)-5,6,7,8-tetrahydrofolate contacts are provided by residues Leu176 and 180–182 (GHL). Lys289 is subject to N6-(pyridoxal phosphate)lysine.

Belongs to the SHMT family. In terms of assembly, homodimer. The cofactor is pyridoxal 5'-phosphate.

It is found in the cytoplasm. The enzyme catalyses (6R)-5,10-methylene-5,6,7,8-tetrahydrofolate + glycine + H2O = (6S)-5,6,7,8-tetrahydrofolate + L-serine. The protein operates within one-carbon metabolism; tetrahydrofolate interconversion. It functions in the pathway amino-acid biosynthesis; glycine biosynthesis; glycine from L-serine: step 1/1. In terms of biological role, catalyzes the reversible interconversion of serine and glycine with tetrahydrofolate (THF) serving as the one-carbon carrier. This reaction serves as the major source of one-carbon groups required for the biosynthesis of purines, thymidylate, methionine, and other important biomolecules. Also exhibits THF-independent aldolase activity toward beta-hydroxyamino acids, producing glycine and aldehydes, via a retro-aldol mechanism. This Chlamydia caviae (strain ATCC VR-813 / DSM 19441 / 03DC25 / GPIC) (Chlamydophila caviae) protein is Serine hydroxymethyltransferase.